The sequence spans 510 residues: NAD(P)H-quinone oxidoreductase subunit 2 B, chloroplastic (510 aa).

13 helical membrane passes run 24–44 (LLLF…GLIL), 57–77 (IPWL…ALLF), 99–119 (IFQF…VEYI), 124–144 (MAIT…MFLC), 150–170 (ITIF…SGYT), 183–203 (YLLM…WLYG), 229–249 (ISIA…PAPF), 295–315 (WHLL…LVAI), 323–343 (MLAY…IVGD), 347–367 (GYAS…GTFA), 395–415 (ALSS…AGFF), 418–438 (LHLF…IGLL), and 484–504 (MIVC…IIAI).

It belongs to the complex I subunit 2 family. NDH is composed of at least 16 different subunits, 5 of which are encoded in the nucleus.

It localises to the plastid. The protein resides in the chloroplast thylakoid membrane. The enzyme catalyses a plastoquinone + NADH + (n+1) H(+)(in) = a plastoquinol + NAD(+) + n H(+)(out). The catalysed reaction is a plastoquinone + NADPH + (n+1) H(+)(in) = a plastoquinol + NADP(+) + n H(+)(out). Functionally, NDH shuttles electrons from NAD(P)H:plastoquinone, via FMN and iron-sulfur (Fe-S) centers, to quinones in the photosynthetic chain and possibly in a chloroplast respiratory chain. The immediate electron acceptor for the enzyme in this species is believed to be plastoquinone. Couples the redox reaction to proton translocation, and thus conserves the redox energy in a proton gradient. The sequence is that of NAD(P)H-quinone oxidoreductase subunit 2 B, chloroplastic from Ceratophyllum demersum (Rigid hornwort).